Consider the following 73-residue polypeptide: Small, acid-soluble spore protein C2 (73 aa).

It belongs to the alpha/beta-type SASP family.

Its function is as follows. SASP are bound to spore DNA. They are double-stranded DNA-binding proteins that cause DNA to change to an a-like conformation. They protect the DNA backbone from chemical and enzymatic cleavage and are thus involved in dormant spore's high resistance to UV light. This Priestia megaterium (Bacillus megaterium) protein is Small, acid-soluble spore protein C2 (SASP-C2).